The chain runs to 137 residues: Small ribosomal subunit protein uS12 (137 aa).

Residues 1–44 are disordered; sequence MPTINQLVRKGRKSRTSKSDAPALNFGYNSMKKKATDNPAPQKR. Asp-102 bears the 3-methylthioaspartic acid mark.

This sequence belongs to the universal ribosomal protein uS12 family. As to quaternary structure, part of the 30S ribosomal subunit. Contacts proteins S8 and S17. May interact with IF1 in the 30S initiation complex.

Functionally, with S4 and S5 plays an important role in translational accuracy. In terms of biological role, interacts with and stabilizes bases of the 16S rRNA that are involved in tRNA selection in the A site and with the mRNA backbone. Located at the interface of the 30S and 50S subunits, it traverses the body of the 30S subunit contacting proteins on the other side and probably holding the rRNA structure together. The combined cluster of proteins S8, S12 and S17 appears to hold together the shoulder and platform of the 30S subunit. The protein is Small ribosomal subunit protein uS12 of Latilactobacillus sakei subsp. sakei (strain 23K) (Lactobacillus sakei subsp. sakei).